Reading from the N-terminus, the 354-residue chain is Uroporphyrinogen decarboxylase (354 aa).

Residues arginine 27 to arginine 31, aspartate 77, tyrosine 154, serine 209, and histidine 327 each bind substrate.

Belongs to the uroporphyrinogen decarboxylase family. Homodimer.

The protein resides in the cytoplasm. The catalysed reaction is uroporphyrinogen III + 4 H(+) = coproporphyrinogen III + 4 CO2. Its pathway is porphyrin-containing compound metabolism; protoporphyrin-IX biosynthesis; coproporphyrinogen-III from 5-aminolevulinate: step 4/4. Functionally, catalyzes the decarboxylation of four acetate groups of uroporphyrinogen-III to yield coproporphyrinogen-III. This chain is Uroporphyrinogen decarboxylase, found in Shewanella baltica (strain OS223).